We begin with the raw amino-acid sequence, 50 residues long: Large ribosomal subunit protein eL39 (50 aa).

It belongs to the eukaryotic ribosomal protein eL39 family. Part of the 50S ribosomal subunit. Interacts weakly with protein L23.

In terms of biological role, binds to the 23S rRNA. Forms part of the polypeptide exit tunnel. The polypeptide is Large ribosomal subunit protein eL39 (rpl39e) (Haloarcula marismortui (strain ATCC 43049 / DSM 3752 / JCM 8966 / VKM B-1809) (Halobacterium marismortui)).